A 324-amino-acid chain; its full sequence is Lipoyl synthase (324 aa).

Residues Cys-71, Cys-76, Cys-82, Cys-97, Cys-101, Cys-104, and Ser-311 each coordinate [4Fe-4S] cluster. Positions Phe-83 to Thr-300 constitute a Radical SAM core domain.

This sequence belongs to the radical SAM superfamily. Lipoyl synthase family. It depends on [4Fe-4S] cluster as a cofactor.

The protein resides in the cytoplasm. It catalyses the reaction [[Fe-S] cluster scaffold protein carrying a second [4Fe-4S](2+) cluster] + N(6)-octanoyl-L-lysyl-[protein] + 2 oxidized [2Fe-2S]-[ferredoxin] + 2 S-adenosyl-L-methionine + 4 H(+) = [[Fe-S] cluster scaffold protein] + N(6)-[(R)-dihydrolipoyl]-L-lysyl-[protein] + 4 Fe(3+) + 2 hydrogen sulfide + 2 5'-deoxyadenosine + 2 L-methionine + 2 reduced [2Fe-2S]-[ferredoxin]. It functions in the pathway protein modification; protein lipoylation via endogenous pathway; protein N(6)-(lipoyl)lysine from octanoyl-[acyl-carrier-protein]: step 2/2. Its function is as follows. Catalyzes the radical-mediated insertion of two sulfur atoms into the C-6 and C-8 positions of the octanoyl moiety bound to the lipoyl domains of lipoate-dependent enzymes, thereby converting the octanoylated domains into lipoylated derivatives. This chain is Lipoyl synthase, found in Nitrosococcus oceani (strain ATCC 19707 / BCRC 17464 / JCM 30415 / NCIMB 11848 / C-107).